The primary structure comprises 89 residues: Small ribosomal subunit protein uS15 (89 aa).

It belongs to the universal ribosomal protein uS15 family. In terms of assembly, part of the 30S ribosomal subunit. Forms a bridge to the 50S subunit in the 70S ribosome, contacting the 23S rRNA.

One of the primary rRNA binding proteins, it binds directly to 16S rRNA where it helps nucleate assembly of the platform of the 30S subunit by binding and bridging several RNA helices of the 16S rRNA. Its function is as follows. Forms an intersubunit bridge (bridge B4) with the 23S rRNA of the 50S subunit in the ribosome. The polypeptide is Small ribosomal subunit protein uS15 (Chlorobium phaeobacteroides (strain BS1)).